Here is a 396-residue protein sequence, read N- to C-terminus: NADH-quinone oxidoreductase subunit D 1 (396 aa).

This sequence belongs to the complex I 49 kDa subunit family. As to quaternary structure, NDH-1 is composed of 14 different subunits. Subunits NuoB, C, D, E, F, and G constitute the peripheral sector of the complex.

It is found in the cell inner membrane. The catalysed reaction is a quinone + NADH + 5 H(+)(in) = a quinol + NAD(+) + 4 H(+)(out). NDH-1 shuttles electrons from NADH, via FMN and iron-sulfur (Fe-S) centers, to quinones in the respiratory chain. The immediate electron acceptor for the enzyme in this species is believed to be ubiquinone. Couples the redox reaction to proton translocation (for every two electrons transferred, four hydrogen ions are translocated across the cytoplasmic membrane), and thus conserves the redox energy in a proton gradient. The protein is NADH-quinone oxidoreductase subunit D 1 of Nitrobacter hamburgensis (strain DSM 10229 / NCIMB 13809 / X14).